The following is a 762-amino-acid chain: uncharacterized protein (762 aa).

The segment at 734 to 762 (QQRPRVAAAAPPPPPQPPAAAVPTTQAST) is disordered. The span at 743 to 753 (APPPPPQPPAA) shows a compositional bias: pro residues.

This is an uncharacterized protein from Ostreid herpesvirus 1 (isolate France) (OsHV-1).